The following is a 471-amino-acid chain: MLDFMDYIQLAFAEATNWNRDNSYSFLTATAQSLLDFSTPERLRVHLSSLATPHFATSYTLGTVGLIDGSVSYLYSTVPLNNTPSRSALIPLRKLARGYRQVQPPVAPVEDWGWQSLLGGLGSSESKPSGNGDSQPSLGRKATLLNATLHLPPPTTLNALFLRRISPTMQLSLAVCSTRGAPLSNSAPQASLLGQLSHDTGKYSNEYLFSTDNSLFGWRGLWNFGPDPRHPKENPSPRLSLLSAGAEAYYSPVSSLIGMSTGLRFSTLPAATEMPSSSSSTSSTTTTSNHGTPISTFPYTLTLVLTPLTGSLSTTYSLRASPNLAFSSRFGFNVYSWESEMVAGCELWRKRRKSSPPPVDDDGLEWARRKMRMADTPGVPPVEPPSTHNRDEENESVLKIRVDQSWNVRLLWEGRVKELLVSAGVGLGPSSFSSSSWAANSTAAGGGQSVGGGVSGKSYWHGVGVSVSYSS.

3 disordered regions span residues 272–291, 374–394, and 436–455; these read TEMP…SNHG, ADTP…DEEN, and SWAA…GGVS. Residues 276–288 show a composition bias toward low complexity; sequence SSSSSTSSTTTTS. A compositionally biased stretch (gly residues) spans 444-455; sequence AGGGQSVGGGVS.

The protein belongs to the MDM10 family. Component of the ER-mitochondria encounter structure (ERMES) or MDM complex, composed of mmm1, mdm10, mdm12 and mdm34. Associates with the mitochondrial outer membrane sorting assembly machinery SAM(core) complex.

It localises to the mitochondrion outer membrane. Functionally, component of the ERMES/MDM complex, which serves as a molecular tether to connect the endoplasmic reticulum and mitochondria. Components of this complex are involved in the control of mitochondrial shape and protein biogenesis and may function in phospholipid exchange. mdm10 is involved in the late assembly steps of the general translocase of the mitochondrial outer membrane (TOM complex). Functions in the tom40-specific route of the assembly of outer membrane beta-barrel proteins, including the association of tom40 with the receptor tom22 and small TOM proteins. Can associate with the SAM(core) complex as well as the mdm12-mmm1 complex, both involved in late steps of the major beta-barrel assembly pathway, that is responsible for biogenesis of all outer membrane beta-barrel proteins. May act as a switch that shuttles between both complexes and channels precursor proteins into the tom40-specific pathway. Plays a role in mitochondrial morphology and in the inheritance of mitochondria. The chain is Mitochondrial distribution and morphology protein 10 (mdmB) from Neosartorya fischeri (strain ATCC 1020 / DSM 3700 / CBS 544.65 / FGSC A1164 / JCM 1740 / NRRL 181 / WB 181) (Aspergillus fischerianus).